The sequence spans 346 residues: tRNA N6-adenosine threonylcarbamoyltransferase (346 aa).

Residues His111 and His115 each coordinate Fe cation. Residues 134-138, Asp167, Gly180, and Asn279 contribute to the substrate site; that span reads LVSGG. Asp307 serves as a coordination point for Fe cation.

Belongs to the KAE1 / TsaD family. Fe(2+) is required as a cofactor.

It localises to the cytoplasm. It carries out the reaction L-threonylcarbamoyladenylate + adenosine(37) in tRNA = N(6)-L-threonylcarbamoyladenosine(37) in tRNA + AMP + H(+). Its function is as follows. Required for the formation of a threonylcarbamoyl group on adenosine at position 37 (t(6)A37) in tRNAs that read codons beginning with adenine. Is involved in the transfer of the threonylcarbamoyl moiety of threonylcarbamoyl-AMP (TC-AMP) to the N6 group of A37, together with TsaE and TsaB. TsaD likely plays a direct catalytic role in this reaction. This Burkholderia ambifaria (strain MC40-6) protein is tRNA N6-adenosine threonylcarbamoyltransferase.